A 360-amino-acid chain; its full sequence is GDSL esterase/lipase At2g31540 (360 aa).

Positions 1 to 23 are cleaved as a signal peptide; it reads MSTSKAITLTLFIATTLLAPCNA. The active-site Nucleophile is S42. Residues N104 and N326 are each glycosylated (N-linked (GlcNAc...) asparagine). Active-site residues include D334 and H337.

It belongs to the 'GDSL' lipolytic enzyme family.

The protein localises to the secreted. This chain is GDSL esterase/lipase At2g31540, found in Arabidopsis thaliana (Mouse-ear cress).